The following is an 849-amino-acid chain: Disks large homolog 3 (849 aa).

Residues 32–101 form a disordered region; that stretch reads DWQVPDPYGP…GKNTPKLNGS (70 aa). The segment covering 41-53 has biased composition (gly residues); sequence PSGGNGASSGYGG. Residues 57–69 show a composition bias toward polar residues; sequence QTLPSQAGATPTP. PDZ domains are found at residues 149–235, 244–330, and 404–484; these read EIVL…VRRR, EVNL…VAKP, and KIIL…AQYR. Ser-157 carries the phosphoserine modification. Residues 519 to 589 form the SH3 domain; sequence KRSLYVRALF…PSKKRVEKKE (71 aa). The 176-residue stretch at 659 to 834 folds into the Guanylate kinase-like domain; sequence ARPVIILGPM…IYNKIKQIIE (176 aa). Tyr-705 carries the phosphotyrosine modification.

The protein belongs to the MAGUK family. Interacts through its PDZ domains with NETO1 and APC. Interacts through its first two PDZ domains with ERBB4. Interacts through its third PDZ domain with NLGN1, and probably with NLGN2 and NLGN3. Interacts through its PDZ domains with GRIN2B and SYNGAP1. Interacts through its guanylate kinase-like domain with DLGAP1, DLGAP2, DLGAP3 and DLGAP4. Interacts with FRMPD4 (via C-terminus). Interacts with LRFN2. Interacts with LRFN1 and LRFN4. Interacts with FLTP. Interacts with DGKI (via PDZ-binding motif).

Functionally, required for learning most likely through its role in synaptic plasticity following NMDA receptor signaling. The sequence is that of Disks large homolog 3 (Dlg3) from Rattus norvegicus (Rat).